Here is a 100-residue protein sequence, read N- to C-terminus: Urease subunit gamma 2 (100 aa).

This sequence belongs to the urease gamma subunit family. As to quaternary structure, heterotrimer of UreA (gamma), UreB (beta) and UreC (alpha) subunits. Three heterotrimers associate to form the active enzyme.

It localises to the cytoplasm. The catalysed reaction is urea + 2 H2O + H(+) = hydrogencarbonate + 2 NH4(+). The protein operates within nitrogen metabolism; urea degradation; CO(2) and NH(3) from urea (urease route): step 1/1. Its function is as follows. Disrupting the ure2 operon has no effect on urease activity or pathogen survival in BALB/c mice when administered orally. This chain is Urease subunit gamma 2, found in Brucella abortus (strain 2308).